Consider the following 400-residue polypeptide: Delta(12) fatty acid desaturase (400 aa).

A helical transmembrane segment spans residues 91 to 111 (LAWPAYWIMQGIVCTGIWVLA). The short motif at 112–116 (HECGH) is the Histidine box-1 element. The short motif at 148–152 (HSKHH) is the Histidine box-2 element. The next 3 membrane-spanning stretches (helical) occupy residues 199–219 (IVTLFWMVIQFLFGWPAYLIM), 245–265 (FFDIIISDLGVLAALGALIYA), and 277–297 (YYIIPYLFVNFWLVLITFLQH). Positions 339–343 (HVAHH) match the Histidine box-3 motif.

It belongs to the fatty acid desaturase type 1 family.

The protein resides in the membrane. It carries out the reaction (9Z)-octadecenoyl-CoA + 2 Fe(II)-[cytochrome b5] + O2 + 2 H(+) = (9Z,12Z)-octadecadienoyl-CoA + 2 Fe(III)-[cytochrome b5] + 2 H2O. The enzyme catalyses (9Z)-hexadecenoyl-CoA + 2 Fe(II)-[cytochrome b5] + O2 + 2 H(+) = (9Z,12Z)-hexadecadienoyl-CoA + 2 Fe(III)-[cytochrome b5] + 2 H2O. It participates in lipid metabolism; polyunsaturated fatty acid biosynthesis. Catalyzes the desaturation of oleic acid (Delta(9)-18:1) to linoleic acid (Delta(9), Delta(12)-18:2). This Mortierella isabellina (Filamentous fungus) protein is Delta(12) fatty acid desaturase.